A 259-amino-acid polypeptide reads, in one-letter code: UPF0246 protein MADE_1015435 (259 aa).

The protein belongs to the UPF0246 family.

The sequence is that of UPF0246 protein MADE_1015435 from Alteromonas mediterranea (strain DSM 17117 / CIP 110805 / LMG 28347 / Deep ecotype).